The following is a 644-amino-acid chain: DNA gyrase subunit B (644 aa).

One can recognise a Toprim domain in the interval 429–543; it reads CEIFLVEGDS…AGYVYIAQPP (115 aa). Mg(2+)-binding residues include Glu-435, Asp-508, and Asp-510.

The protein belongs to the type II topoisomerase GyrB family. As to quaternary structure, heterotetramer, composed of two GyrA and two GyrB chains. In the heterotetramer, GyrA contains the active site tyrosine that forms a transient covalent intermediate with DNA, while GyrB binds cofactors and catalyzes ATP hydrolysis. The cofactor is Mg(2+). Requires Mn(2+) as cofactor. Ca(2+) serves as cofactor.

The protein resides in the cytoplasm. The catalysed reaction is ATP-dependent breakage, passage and rejoining of double-stranded DNA.. A type II topoisomerase that negatively supercoils closed circular double-stranded (ds) DNA in an ATP-dependent manner to modulate DNA topology and maintain chromosomes in an underwound state. Negative supercoiling favors strand separation, and DNA replication, transcription, recombination and repair, all of which involve strand separation. Also able to catalyze the interconversion of other topological isomers of dsDNA rings, including catenanes and knotted rings. Type II topoisomerases break and join 2 DNA strands simultaneously in an ATP-dependent manner. The chain is DNA gyrase subunit B from Staphylococcus aureus (strain COL).